The primary structure comprises 263 residues: HTH-type transcriptional repressor NanR (263 aa).

The segment at 1 to 21 (MGLMNAFDSQTEDSSPVIGRN) is disordered. The region spanning 30-98 (KKLSEMVEEE…NGERARVSRP (69 aa)) is the HTH gntR-type domain. Residues 58 to 77 (ERELMAFFNVGRPSVREALA) constitute a DNA-binding region (H-T-H motif).

It belongs to the NanR family.

In terms of biological role, transcriptional repressor that controls expression of the genes required for the catabolism of sialic acids. The polypeptide is HTH-type transcriptional repressor NanR (Escherichia coli O7:K1 (strain IAI39 / ExPEC)).